A 461-amino-acid chain; its full sequence is Propanal dehydrogenase (CoA-propanoylating) (461 aa).

The tract at residues 1-18 is targets protein to the BMC; sequence MNTSELETLIRNILSEQL.

It belongs to the EutE/PduP family. As to quaternary structure, interacts with PduK, probably with its BMC-containing N-terminus. Interacts with shell proteins PduA and PduJ, interacts with PduQ.

It is found in the bacterial microcompartment. It carries out the reaction propanal + NAD(+) + CoA = propanoyl-CoA + NADH + H(+). It participates in polyol metabolism; 1,2-propanediol degradation. In terms of biological role, a CoA-acylating aldehyde dehydrogenase required for optimal 1,2-propanediol (1,2-PD) degradation. Optimizes growth in the bacterial microcompartment (BMC) dedicated to 1,2-PD degradation by minimizing propionaldehyde toxicity. NAD(+) and NADH are regenerated internally within the Pdu BMC by the PduP and PduQ enzymes, which reduce NAD(+) and oxidize NADH respectively, although there must also be cofactor transport across the BMC. Directly targeted to the BMC. Expression of a cosmid containing the full 21-gene pdu operon in E.coli allows E.coli to grow on 1,2-propanediol (1,2-PD) with the appearance of bacterial microcompartments (BMC) in its cytoplasm. Its function is as follows. The 1,2-PD-specific bacterial microcompartment (BMC) concentrates low levels of 1,2-PD catabolic enzymes, concentrates volatile reaction intermediates thus enhancing pathway flux and keeps the level of toxic, mutagenic propionaldehyde low. This Citrobacter freundii protein is Propanal dehydrogenase (CoA-propanoylating).